A 130-amino-acid chain; its full sequence is Large ribosomal subunit protein bL12 (130 aa).

A disordered region spans residues 94-114 (MTEGLPKTVKEKTSKSDAEDT).

The protein belongs to the bacterial ribosomal protein bL12 family. Homodimer. Part of the ribosomal stalk of the 50S ribosomal subunit. Forms a multimeric L10(L12)X complex, where L10 forms an elongated spine to which 2 to 4 L12 dimers bind in a sequential fashion. Binds GTP-bound translation factors.

Its function is as follows. Forms part of the ribosomal stalk which helps the ribosome interact with GTP-bound translation factors. Is thus essential for accurate translation. The sequence is that of Large ribosomal subunit protein bL12 from Chlamydia caviae (strain ATCC VR-813 / DSM 19441 / 03DC25 / GPIC) (Chlamydophila caviae).